The chain runs to 317 residues: 3',5'-bisphosphate nucleotidase (317 aa).

D46 serves as the catalytic Proton acceptor. The Mg(2+) site is built by E69, D118, I120, and D121. T123 serves as the catalytic Proton acceptor. T123 serves as a coordination point for adenosine 3',5'-bisphosphate. Positions 198, 203, 227, 230, 244, 251, and 257 each coordinate AMP. Residues H203, S227, K230, and R244 each coordinate adenosine 3',5'-bisphosphate. Residue D257 coordinates Mg(2+). D257 is a binding site for adenosine 3',5'-bisphosphate.

It belongs to the inositol monophosphatase superfamily. Monomer. The cofactor is Mg(2+).

It is found in the cytoplasm. It carries out the reaction adenosine 3',5'-bisphosphate + H2O = AMP + phosphate. The catalysed reaction is 1D-myo-inositol 1,4-bisphosphate + H2O = 1D-myo-inositol 4-phosphate + phosphate. With respect to regulation, inhibited by Li(2+). Its function is as follows. Phosphatase that converts 3'-phosphoadenosine 5'-phosphate (PAP) to AMP. Is also able to hydrolyze inositol 1,4-bisphosphate but with less efficiency. The chain is 3',5'-bisphosphate nucleotidase from Entamoeba histolytica (strain ATCC 30459 / HM-1:IMSS / ABRM).